A 439-amino-acid chain; its full sequence is GTPase Obg (439 aa).

An Obg domain is found at 5 to 164; it reads TDFFDQATIV…LTLELELKML (160 aa). Residues 165–335 form the OBG-type G domain; that stretch reads ADVGLVGFPN…LLRRVADLLR (171 aa). GTP contacts are provided by residues 171 to 178, 196 to 200, 217 to 220, 287 to 290, and 316 to 318; these read GFPNAGKS, FTTLT, DIPG, NKAD, and SAA. Serine 178 and threonine 198 together coordinate Mg(2+). The region spanning 356–433 is the OCT domain; that stretch reads LPEVDENAFT…IGRAELVWDD (78 aa).

It belongs to the TRAFAC class OBG-HflX-like GTPase superfamily. OBG GTPase family. As to quaternary structure, monomer. Mg(2+) serves as cofactor.

It is found in the cytoplasm. In terms of biological role, an essential GTPase which binds GTP, GDP and possibly (p)ppGpp with moderate affinity, with high nucleotide exchange rates and a fairly low GTP hydrolysis rate. Plays a role in control of the cell cycle, stress response, ribosome biogenesis and in those bacteria that undergo differentiation, in morphogenesis control. The polypeptide is GTPase Obg (Chloroflexus aurantiacus (strain ATCC 29364 / DSM 637 / Y-400-fl)).